The primary structure comprises 456 residues: DnaJ homolog dnj-10 (456 aa).

The region spanning 44-108 (DYYKTLGVDK…TKRQEYDAYG (65 aa)) is the J domain. A CR-type zinc finger spans residues 178-257 (GATKNVSVNV…CEGEGQTVQR (80 aa)). CXXCXGXG motif repeat units lie at residues 208-215 (CPYCNGTG), 231-238 (CNRCRGSG), and 245-252 (CQECEGEG). Residues 395 to 429 (KGLEKNQKTEEKETKKNEEKKSEGASESQKRRSEP) are compositionally biased toward basic and acidic residues. The interval 395–443 (KGLEKNQKTEEKETKKNEEKKSEGASESQKRRSEPVAENAETIDENQEN) is disordered.

The protein is DnaJ homolog dnj-10 (dnj-10) of Caenorhabditis elegans.